Reading from the N-terminus, the 1117-residue chain is DNA-directed RNA polymerase subunit beta (1117 aa).

The interval 1094–1117 (QLARRTPPRPTYESLSRESLDDDE) is disordered. The segment covering 1108-1117 (LSRESLDDDE) has biased composition (basic and acidic residues).

This sequence belongs to the RNA polymerase beta chain family. In terms of assembly, in cyanobacteria the RNAP catalytic core is composed of 2 alpha, 1 beta, 1 beta', 1 gamma and 1 omega subunit. When a sigma factor is associated with the core the holoenzyme is formed, which can initiate transcription.

It carries out the reaction RNA(n) + a ribonucleoside 5'-triphosphate = RNA(n+1) + diphosphate. Functionally, DNA-dependent RNA polymerase catalyzes the transcription of DNA into RNA using the four ribonucleoside triphosphates as substrates. This Trichormus variabilis (strain ATCC 29413 / PCC 7937) (Anabaena variabilis) protein is DNA-directed RNA polymerase subunit beta.